Here is a 1083-residue protein sequence, read N- to C-terminus: Protein HOS4 (1083 aa).

2 disordered regions span residues 1-233 (MNET…RKLV) and 267-328 (SSLF…YRDS). S14 and S16 each carry phosphoserine. Residues 24–62 (TRREELEKISKQETSEEEDTAGKHEQRETLSEEVSDKFP) show a composition bias toward basic and acidic residues. At T37 the chain carries Phosphothreonine. S67 is modified (phosphoserine). A compositionally biased stretch (polar residues) spans 67 to 85 (SFRSQTTSVHQATQNNLNA). Residues 86–118 (KESEDLAHKNDASSHEGEVNGDSRPDDVPETNE) show a composition bias toward basic and acidic residues. Polar residues predominate over residues 135–149 (PNVRNVDIQNHQPFS). Over residues 151–166 (DQLRAMLKEPKRKTVD) the composition is skewed to basic and acidic residues. Residues 167–185 (DFIEEEGLGAVEEEDLSDE) are compositionally biased toward acidic residues. Residues 186 to 207 (VLEKNTTEPENVEKDIEYSDSD) are compositionally biased toward basic and acidic residues. Over residues 277 to 293 (VKETNNNLSNMNSSPAQ) the composition is skewed to polar residues. Residue S290 is modified to Phosphoserine. Positions 300 to 310 (VSRSNDSNKSS) are enriched in low complexity. The segment covering 314–323 (VSKRPKQKKG) has biased composition (basic residues). ANK repeat units follow at residues 329–359 (GGRTRLQIACDKGKYDVVKKMIEEGGYDIND), 363–392 (AGNTALHEAALQGHIEIVELLIENGADVNI), and 398–427 (FGDTPLIDASANGHLDVVKYLLKNGADPTI). The segment at 472-516 (AGIHNDKSKNGNNAHTIDQPPFDNTTKAKNEKAADSPSMASNIDE) is disordered. Positions 481–496 (NGNNAHTIDQPPFDNT) are enriched in polar residues. At S507 the chain carries Phosphoserine. ANK repeat units lie at residues 532–561 (AGKEKLFKASKEGHLPYVGTYVENGGKIDL) and 593–622 (NKTSALMVAVGRGHLGTVKLLLEAGADPTK). Disordered stretches follow at residues 661 to 742 (HSED…DDNE) and 762 to 790 (DEEKLKSISPLSMEPHSPKKAKSVEISKI). Over residues 665–675 (NNDDDDDDDNN) the composition is skewed to acidic residues. S698 bears the Phosphoserine mark. T700 carries the post-translational modification Phosphothreonine. The segment covering 721-740 (NNDRDVKESTTSDSRKRLDD) has biased composition (basic and acidic residues). S778 carries the phosphoserine modification.

As to quaternary structure, identified in the Set3C complex with HOS2, HST1, SNT1, SIF2, CPR1 and SET3.

Its function is as follows. Unknown. Component of the Set3C complex, which is required to repress early/middle sporulation genes during meiosis. This chain is Protein HOS4 (HOS4), found in Saccharomyces cerevisiae (strain ATCC 204508 / S288c) (Baker's yeast).